A 251-amino-acid polypeptide reads, in one-letter code: Probable transcriptional regulatory protein Pmob_0807 (251 aa).

Residues 1–22 (MSGHNKWANIKHRKGAQDAKRS) form a disordered region.

The protein belongs to the TACO1 family.

The protein localises to the cytoplasm. The chain is Probable transcriptional regulatory protein Pmob_0807 from Petrotoga mobilis (strain DSM 10674 / SJ95).